A 448-amino-acid polypeptide reads, in one-letter code: Beclin-1 (448 aa).

Met-1 is modified (N-acetylmethionine). 2 positions are modified to phosphoserine: Ser-14 and Ser-29. The disordered stretch occupies residues 47 to 72 (TTAQAKPGESQEEEANSGEEPFIETR). A phosphoserine; by AMPK mark is found at Ser-88, Ser-91, and Ser-94. Positions 106-125 (TMENLSRRLKVTGDLFDIMS) match the BH3 motif. The interval 110–157 (LSRRLKVTGDLFDIMSGQTDVDHPLCEECTDTLLDQLDTQLNVTENEC) is interaction with BCL2 and BCL2L1 isoform Bcl-X(L). Phosphothreonine; by DAPK1 is present on Thr-117. Positions 140–267 (DTLLDQLDTQ…QLDKLKKTNV (128 aa)) form a coiled coil. The evolutionary conserved domain (ECD) stretch occupies residues 243–448 (DELKSVENQM…AWVSSQFYNK (206 aa)). Glycyl lysine isopeptide (Lys-Gly) (interchain with G-Cter in ubiquitin) cross-links involve residues Lys-400 and Lys-435. A required for membrane-association region spans residues 423 to 448 (WTKALKFMLTNLKWGLAWVSSQFYNK).

The protein belongs to the beclin family. In terms of assembly, a homodimeric form is proposed to exist; this metastable form readily transits to ATG14- or UVRAG-containing complexes with BECN1:UVRAG being more stable than BECN1:ATG14. Component of the PI3K (PI3KC3/PI3K-III/class III phosphatidylinositol 3-kinase) complex the core of which is composed of the catalytic subunit PIK3C3, the regulatory subunit PIK3R4 and BECN1 associating with additional regulatory/auxiliary subunits to form alternative complex forms. Alternative complex forms containing a fourth regulatory subunit in a mutually exclusive manner are PI3K complex I (PI3KC3-C1) containing ATG14, and PI3K complex II (PI3KC3-C2) containing UVRAG. PI3KC3-C1 displays a V-shaped architecture with PIK3R4 serving as a bridge between PIK3C3 and the ATG14:BECN1 subcomplex. Both, PI3KC3-C1 and PI3KC3-C2, can associate with further regulatory subunits, such as RUBCN, SH3GLB1/Bif-1 and AMBRA1. PI3KC3-C1 probably associates with PIK3CB. Forms a complex with PPP2CA and AMBRA1; AMBRA1 and BECN1 components of the complex regulate MYC stability via different pathways. Component of the complex, at least composed of LRPPRC, BECN1 and BCL2; the interactions prevent BECN1 from forming an autophagy-inducing complex with PIK3C3. Interacts with AMBRA1, GOPC, GRID2. Interacts with BCL2 and BCL2L1 isoform Bcl-X(L); the interaction inhibits BECN1 function in promoting autophagy by interfering with the formation of the PI3K complex. Interacts with cytosolic HMGB1; inhibits the interaction of BECN1 and BCL2 leading to promotion of autophagy. Interacts with USP10, USP13, DAPK1, RAB39A. Interacts with SLAMF1. Interacts with the poly-Gln domain of ATXN3; the interaction causes deubiquitination at Lys-400 and stabilizes BECN1. Interacts with VMP1. Interacts with TRIM5; the interaction causes activation of BECN1 by causing its dissociation from its inhibitors BCL2 and TAB2. Interacts with active ULK1 (phosphorylated on 'Ser-317') and MEFV simultaneously. Interacts with WDR81 and WDR91; negatively regulates the PI3 kinase/PI3K activity associated with endosomal membranes. Interacts with LAPTM4B; competes with EGFR for LAPTM4B binding; regulates EGFR activity. Interacts with TRIM50. Interacts with TRIM16. Interacts with ATG14; this interaction is increased in the absence of TMEM39A. Interacts with WASHC1; preventing interaction with AMBRA1 and the DCX(AMBRA1) complex and subsequent ubiquitination. Interacts with TRIM17. Interacts with BCL2L10/BCL-B (via BH1 domain). Interacts with SH3BGRL. Interacts with IRGM; enhancing BECN1-interacting partners and influencing the composition of the BECN1 complex. Interacts with ARMC3. Interacts with LRPPRC. Post-translationally, phosphorylation at Thr-117 by DAPK1 reduces its interaction with BCL2 and BCL2L1 and promotes induction of autophagy. In response to autophagic stimuli, phosphorylated at serine residues by AMPK in an ATG14-dependent manner, and this phosphorylation is critical for maximally efficient autophagy. In terms of processing, polyubiquitinated by NEDD4, both with 'Lys-11'- and 'Lys-63'-linkages. 'Lys-11'-linked polyubiquitination leads to degradation and is enhanced when the stabilizing interaction partner VPS34 is depleted. Deubiquitinated by USP10 and USP13, leading to stabilize the PIK3C3/VPS34-containing complexes. Polyubiquitinated at Lys-400 with 'Lys-48'-linkages. 'Lys-48'-linked polyubiquitination of Lys-400 leads to degradation. Deubiquitinated by ATXN3, leading to stabilization. Ubiquitinated at Lys-435 via 'Lys-63'-linkage by the DCX(AMBRA1) complex, thereby increasing the association between BECN1 and PIK3C3 to promote PIK3C3 activity. 'Lys-48'-linked ubiquitination by RNF216 leads to proteasomal degradation and autophagy inhibition. Proteolytically processed by caspases including CASP8 and CASP3; the C-terminal fragments lack autophagy-inducing capacity and are proposed to induce apoptosis. Thus the cleavage is proposed to be an determinant to switch from autophagy to apoptosis pathways affecting cellular homeostasis including viral infections and survival of tumor cells.

It is found in the cytoplasm. The protein localises to the golgi apparatus. It localises to the trans-Golgi network membrane. The protein resides in the endosome membrane. Its subcellular location is the endoplasmic reticulum membrane. It is found in the mitochondrion membrane. The protein localises to the cytoplasmic vesicle. It localises to the autophagosome. The protein resides in the mitochondrion. Its subcellular location is the nucleus. Its function is as follows. Plays a central role in autophagy. Acts as a core subunit of the PI3K complex that mediates formation of phosphatidylinositol 3-phosphate; different complex forms are believed to play a role in multiple membrane trafficking pathways: PI3KC3-C1 is involved in initiation of autophagosomes and PI3KC3-C2 in maturation of autophagosomes and endocytosis. Involved in regulation of degradative endocytic trafficking and required for the abscission step in cytokinesis, probably in the context of PI3KC3-C2. Essential for the formation of PI3KC3-C2 but not PI3KC3-C1 PI3K complex forms. Involved in endocytosis. May play a role in antiviral host defense. Functionally, beclin-1-C 35 kDa localized to mitochondria can promote apoptosis; it induces the mitochondrial translocation of BAX and the release of proapoptotic factors. The polypeptide is Beclin-1 (Becn1) (Rattus norvegicus (Rat)).